Consider the following 112-residue polypeptide: MCHTSHSSGCPMACPGSPCCVPSTCYPPEGYGTSCCCSAPCVALLCRPLCGVSTCCQPACCVPSPCQVACCVPVSCKPVLCVASFCPTSGCCQPFCPTLVYRPVTWSTPTGC.

A run of 15 repeats spans residues 10–14 (CPMAC), 20–24 (CVPST), 25–29 (CYPPE), 35–39 (CCCSA), 41–45 (CVALL), 46–50 (CRPLC), 56–60 (CQPAC), 61–65 (CVPSP), 66–70 (CQVAC), 71–75 (CVPVS), 76–80 (CKPVL), 81–85 (CVASF), 86–90 (CPTSG), 91–95 (CCQPF), and 96–100 (CPTLV). The 15 X 5 AA approximate repeats stretch occupies residues 10–100 (CPMACPGSPC…CCQPFCPTLV (91 aa)).

The protein belongs to the KRTAP type 12 family. Interacts with hair keratins. In terms of tissue distribution, restricted to a narrow region of the hair fiber cuticle, lying approximately 20 cell layers above the apex of the dermal papilla of the hair root; not detected in any other tissues.

In terms of biological role, in the hair cortex, hair keratin intermediate filaments are embedded in an interfilamentous matrix, consisting of hair keratin-associated proteins (KRTAP), which are essential for the formation of a rigid and resistant hair shaft through their extensive disulfide bond cross-linking with abundant cysteine residues of hair keratins. The matrix proteins include the high-sulfur and high-glycine-tyrosine keratins. The sequence is that of Keratin-associated protein 12-4 (KRTAP12-4) from Homo sapiens (Human).